Here is a 529-residue protein sequence, read N- to C-terminus: ATP synthase F(1) complex catalytic subunit beta, mitochondrial (529 aa).

Residues Met1 to Tyr46 constitute a mitochondrion transit peptide. O-linked (GlcNAc) serine glycosylation occurs at Ser106. An N6-acetyllysine; alternate mark is found at Lys124, Lys133, and Lys161. N6-succinyllysine; alternate is present on residues Lys124, Lys133, and Lys161. N6-acetyllysine is present on Lys198. ADP-binding residues include Gly209, Val210, Gly211, Lys212, Thr213, and Val214. Residue Gly209 coordinates ATP. Gly209, Val210, Gly211, Lys212, and Thr213 together coordinate phosphate. ATP is bound by residues Gly211, Lys212, Thr213, and Val214. Position 213 (Thr213) interacts with Mg(2+). Residue Glu238 participates in Mg(2+) binding. Residue Arg239 participates in ATP binding. Residues Lys259 and Lys264 each carry the N6-acetyllysine; alternate modification. Residues Lys259 and Lys264 each carry the N6-succinyllysine; alternate modification. Residue Thr312 is modified to Phosphothreonine. Residue Ser415 is modified to Phosphoserine. At Lys426 the chain carries N6-acetyllysine. Ser433 carries the phosphoserine modification. Lys480 and Lys485 each carry N6-acetyllysine. An N6-acetyllysine; alternate modification is found at Lys522. Lys522 bears the N6-succinyllysine; alternate mark. Ser529 carries the phosphoserine modification.

Belongs to the ATPase alpha/beta chains family. Homotrimer. Component of the ATP synthase complex composed at least of ATP5F1A/subunit alpha, ATP5F1B/subunit beta, ATP5MC1/subunit c (homooctomer), MT-ATP6/subunit a, MT-ATP8/subunit 8, ATP5ME/subunit e, ATP5MF/subunit f, ATP5MG/subunit g, ATP5MK/subunit k, ATP5MJ/subunit j, ATP5F1C/subunit gamma, ATP5F1D/subunit delta, ATP5F1E/subunit epsilon, ATP5PF/subunit F6, ATP5PB/subunit b, ATP5PD/subunit d, ATP5PO/subunit OSCP. ATP synthase complex consists of a soluble F(1) head domain (subunits alpha(3) and beta(3)) - the catalytic core - and a membrane F(0) domain - the membrane proton channel (subunits c, a, 8, e, f, g, k and j). These two domains are linked by a central stalk (subunits gamma, delta, and epsilon) rotating inside the F1 region and a stationary peripheral stalk (subunits F6, b, d, and OSCP). Interacts with PPIF. Interacts with BCL2L1 isoform BCL-X(L); the interaction mediates the association of BCL2L1 isoform BCL-X(L) with the mitochondrial membrane F(1)F(0) ATP synthase and enhances neurons metabolic efficiency. Interacts with CLN5 and PPT1. Interacts with S100A1; this interaction increases F1-ATPase activity. Interacts with MTLN. Interacts with TTC5/STRAP; the interaction results in decreased mitochondrial ATP production.

The protein localises to the mitochondrion inner membrane. It carries out the reaction ATP + H2O + 4 H(+)(in) = ADP + phosphate + 5 H(+)(out). In terms of biological role, catalytic subunit beta, of the soluble F(1) head domain within the mitochondrial ATP synthase complex (F(1)F(0) ATP synthase or complex V) that produces ATP from ADP and phosphate inorganique in the presence of a proton gradient across the membrane which is generated by electron transport complexes of the respiratory chain. With the non-catalytic subunit alpha (ATP5F1A), forms the catalytic core in the F(1) domain. ATP synthase complex consist of two structural domains, F(1) - containing the extramembraneous catalytic core, and F(0) - containing the membrane proton channel, linked together by a central stalk and a peripheral stalk. During catalysis, ATP synthesis in the catalytic domain of F(1) is coupled via a rotary mechanism of the central stalk subunits to proton translocation. Its function is as follows. Catalytic subunit beta, of the mitochondrial membrane ATP synthase complex (F(1)F(0) ATP synthase or Complex V) that produces ATP from ADP in the presence of a proton gradient across the membrane which is generated by electron transport complexes of the respiratory chain. ATP synthase complex consist of a soluble F(1) head domain - the catalytic core - and a membrane F(1) domain - the membrane proton channel. These two domains are linked by a central stalk rotating inside the F(1) region and a stationary peripheral stalk. During catalysis, ATP synthesis in the catalytic domain of F(1) is coupled via a rotary mechanism of the central stalk subunits to proton translocation. In vivo, can only synthesize ATP although its ATP hydrolase activity can be activated artificially in vitro. With the subunit alpha (ATP5F1A), forms the catalytic core in the F(1) domain. This Rattus norvegicus (Rat) protein is ATP synthase F(1) complex catalytic subunit beta, mitochondrial.